The primary structure comprises 156 residues: Ribosomal RNA large subunit methyltransferase H (156 aa).

Residues leucine 73, glycine 104, and 123 to 128 (LSPLTM) each bind S-adenosyl-L-methionine.

The protein belongs to the RNA methyltransferase RlmH family. Homodimer.

The protein resides in the cytoplasm. The catalysed reaction is pseudouridine(1915) in 23S rRNA + S-adenosyl-L-methionine = N(3)-methylpseudouridine(1915) in 23S rRNA + S-adenosyl-L-homocysteine + H(+). Its function is as follows. Specifically methylates the pseudouridine at position 1915 (m3Psi1915) in 23S rRNA. The polypeptide is Ribosomal RNA large subunit methyltransferase H (Proteus mirabilis (strain HI4320)).